We begin with the raw amino-acid sequence, 594 residues long: MLRTHTCGELRRDHIDQTVTLAGWVHRRRDHGTVLFLDLRDRYGLTQVIVDPSSNPEARAMLDSIKNEYVIQVTGRVRSRLEGAENANLATGAIELEVQSAKILNTAKTPPILVNRDGGEDEALRLKYRYIELRRERQQHILGLRHRTIKFMRDWMDREGFWEIETPILMKSTPEGARDYLVPSRLHPGEFYALPQSPQQLKQLLMVSGIDKYFQIARCMRDEDLRADRQPEFTQLDIEMSFVEQDDVLDVVERLMTELVANVTPHKRLVSPFPRLTYADAIEYYGSDKPDLRYDLKFVNVGEIVKDSQFGVFTGALSSGGKVQAIRLPGCGSYSRKQIDDLQEVAKIGGAKGMAWMAIEADGSVRSPIAKFFEQAQLDQLKSATAAEAGDLIVYVADKPAVVAASLDKVRREMAKRLDLADKDLMHFAWVIDFPMFEYNAESGEWDAAHHPFCMVNPADVEKMQRGEFEGVRAASYDLVCNGYELASGSIRIHDRSIQQYIFDRLPYSPEEIQKRFGHMLEAFEYGAPPHGGMAPGIDRLVMLLADTDNIRDVIAFPKTQRAEDLMMNAPSSVDAKQLRELGLRLADGVEPRG.

Glu-175 contributes to the L-aspartate binding site. The tract at residues 199–202 (QQLK) is aspartate. Position 221 (Arg-221) interacts with L-aspartate. ATP-binding positions include 221–223 (RDE) and Gln-230. Residue His-450 participates in L-aspartate binding. Residue Glu-485 coordinates ATP. Residue Arg-492 coordinates L-aspartate. 537 to 540 (GIDR) serves as a coordination point for ATP.

The protein belongs to the class-II aminoacyl-tRNA synthetase family. Type 1 subfamily. In terms of assembly, homodimer.

It is found in the cytoplasm. It carries out the reaction tRNA(Asx) + L-aspartate + ATP = L-aspartyl-tRNA(Asx) + AMP + diphosphate. In terms of biological role, aspartyl-tRNA synthetase with relaxed tRNA specificity since it is able to aspartylate not only its cognate tRNA(Asp) but also tRNA(Asn). Reaction proceeds in two steps: L-aspartate is first activated by ATP to form Asp-AMP and then transferred to the acceptor end of tRNA(Asp/Asn). The protein is Aspartate--tRNA(Asp/Asn) ligase of Herpetosiphon aurantiacus (strain ATCC 23779 / DSM 785 / 114-95).